Reading from the N-terminus, the 61-residue chain is UPF0181 protein Ent638_2380 (61 aa).

This sequence belongs to the UPF0181 family.

This chain is UPF0181 protein Ent638_2380, found in Enterobacter sp. (strain 638).